Here is a 357-residue protein sequence, read N- to C-terminus: DNA replication and repair protein RecF (357 aa).

Gly30–Thr37 lines the ATP pocket.

It belongs to the RecF family.

It localises to the cytoplasm. Its function is as follows. The RecF protein is involved in DNA metabolism; it is required for DNA replication and normal SOS inducibility. RecF binds preferentially to single-stranded, linear DNA. It also seems to bind ATP. This chain is DNA replication and repair protein RecF, found in Salmonella schwarzengrund (strain CVM19633).